The primary structure comprises 435 residues: Glutamyl-tRNA reductase (435 aa).

Substrate-binding positions include 49-52, serine 109, 114-116, and glutamine 120; these read TCNR and ETQ. Cysteine 50 serves as the catalytic Nucleophile. An NADP(+)-binding site is contributed by 189 to 194; that stretch reads GAGEMS.

Belongs to the glutamyl-tRNA reductase family. Homodimer.

The enzyme catalyses (S)-4-amino-5-oxopentanoate + tRNA(Glu) + NADP(+) = L-glutamyl-tRNA(Glu) + NADPH + H(+). Its pathway is porphyrin-containing compound metabolism; protoporphyrin-IX biosynthesis; 5-aminolevulinate from L-glutamyl-tRNA(Glu): step 1/2. In terms of biological role, catalyzes the NADPH-dependent reduction of glutamyl-tRNA(Glu) to glutamate 1-semialdehyde (GSA). This is Glutamyl-tRNA reductase from Listeria monocytogenes serovar 1/2a (strain ATCC BAA-679 / EGD-e).